Consider the following 210-residue polypeptide: Coatomer subunit zeta-2 (210 aa).

The span at 1–12 (MQRPEAWPRPHP) shows a compositional bias: basic and acidic residues. Residues 1–34 (MQRPEAWPRPHPGEGAAAAQAGGPAPPARAGEPS) form a disordered region. The segment covering 13 to 34 (GEGAAAAQAGGPAPPARAGEPS) has biased composition (low complexity).

It belongs to the adaptor complexes small subunit family. Oligomeric complex.

Its subcellular location is the cytoplasm. It is found in the endoplasmic reticulum-Golgi intermediate compartment membrane. The protein resides in the golgi apparatus membrane. The protein localises to the cytoplasmic vesicle. It localises to the COPI-coated vesicle membrane. In terms of biological role, the coatomer is a cytosolic protein complex that binds to dilysine motifs and reversibly associates with Golgi non-clathrin-coated vesicles, which further mediate biosynthetic protein transport from the ER, via the Golgi up to the trans Golgi network. Coatomer complex is required for budding from Golgi membranes, and is essential for the retrograde Golgi-to-ER transport of dilysine-tagged proteins. The zeta subunit may be involved in regulating the coat assembly and, hence, the rate of biosynthetic protein transport due to its association-dissociation properties with the coatomer complex. This Homo sapiens (Human) protein is Coatomer subunit zeta-2 (COPZ2).